The primary structure comprises 728 residues: MSDRIDRDVINALIAGHFADPFSVLGMHQTTAGLEVRALLPDATEVWVIEPKTGRKVGKLECIDSRGFFSGVLPRRKNFFRYQLAVVWHGQQNLIDDPYRFGPLIQEMDAWLLSEGTHLRPYETLGAHADTMDGVTGTRFSVWAPNAQRVSVVGQFNYWDGRRHPMRLRKESGIWELFIPGAQHGQLYKFEMIDAHGKLRIKADPYAFEAQMRPETASLICGLPEKVVQTEERKQANRFDAPVSIYEVHLGSWRRHTDNNFWLSYRELADQLIPYVKWMGFTHLELLPVNEHPFDGSWGYQPTGLYAPTRRFGTRDDFRYFINAAHQAGLNVILDWVPGHFPSDDFGLADFDGTKLYEHSDPREGYHQDWNTLIYNYGRREVSNYLVGNALYWIERFGIDALRVDAVASMIYRDYSRKEGEWIPNEFGGRENLEAIEFLRNTNRILGEQVSGAVSMAEESTDFAGVSRPQDMGGLGFWYKWNLGWMHDTLDYMKLDPVHRQYHHDKLTFGMLYNYTENFVLPLSHDEVVHGKKSILDRMPGDAWQKFANLRAYYGWMWAFPGKKLLFMGNEFAQGREWNHDASLDWHLLEGGDNWHHGVQRLVRDLNHTYRHHKALHELDFDAYGFEWLVVDDNERSVLIFVRRDKVGNEIIVASNFTPVPRHDYRFGINQPGKWREIVNTDSMHYHGSNTGNGGVVHSDEIASHGRQHSLSLTLPPLATIWLVREGE.

Asp405 serves as the catalytic Nucleophile. The active-site Proton donor is the Glu458.

Belongs to the glycosyl hydrolase 13 family. GlgB subfamily. In terms of assembly, monomer.

It carries out the reaction Transfers a segment of a (1-&gt;4)-alpha-D-glucan chain to a primary hydroxy group in a similar glucan chain.. It functions in the pathway glycan biosynthesis; glycogen biosynthesis. In terms of biological role, catalyzes the formation of the alpha-1,6-glucosidic linkages in glycogen by scission of a 1,4-alpha-linked oligosaccharide from growing alpha-1,4-glucan chains and the subsequent attachment of the oligosaccharide to the alpha-1,6 position. In Citrobacter koseri (strain ATCC BAA-895 / CDC 4225-83 / SGSC4696), this protein is 1,4-alpha-glucan branching enzyme GlgB.